Here is a 1161-residue protein sequence, read N- to C-terminus: MEPEEERIRYSQRLRGTMRRRYEDDGISDDEIEGKRTFDLEEKLQTNKYNANFVTFMEGKDFNVEYIQRGGLRDPLIFKNSDGLGIKMPDPDFTVNDVKMCVGSRRMVDVMDVNTQKGIEMTMAQWTRYYETPEEEREKLYNVISLEFSHTRLENMVQWPSTVDFIDWVDNMWPRHLKESQTESTNAILEMQYPKVQKYCLISVRGCYTDFHVDFGGTSVWYHIHQGGKVFWLIPPTAHNLELYENWLLSGKQGDIFLGDRVSDCQRIELKQGYTFVIPSGWIHAVYTPTDTLVFGGNFLHSFNIPMQLKIYSIEDRTRVPNKFRYPFYYEMCWYVLERYVYCITNRSHLTKDFQKESLSMDMELNELESGNGDEEGVDREARRMNNKRSVLTSPVANGVNLDYDGLGKACRSLPSLKKTLSGDSSSDSTRGSHNGQVWDPQCSPKKDRQVHLTHFELEGLRCLVDKLESLPLHKKCVPTGIEDEDALIADVKILLEELASSDPKLALTGVPIVQWPKRDKLKFPTRPKVRVPTIPITKPHTMKPAPRLTPVRPAAASPIVSGARRRRVRCRKCKACVQGECGVCHYCRDMKKFGGPGRMKQSCVLRQCLAPRLPHSVTCSLCGEVDQNEETQDFEKKLMECCICNEIVHPGCLQMDGEGLLNEELPNCWECPKCYQEDSSDKAQKRKIEESDEEAVQAKVLRPLRSCEEPLTPPPHSPTSMLQLIHDPVSPRGMVTRSSPGAGPSDHHSASRDERFKRRQLLRLQATERTMVREKENNPSGKKELSEVEKAKIRGSYLTVTLQRPTKELHGTSIVPKLQAITASSANLRPNPRVLMQHCPARNPQHGDEEGLGGEEEEEEEEEEDDSAEEGGAARLNGRGSWAQDGDESWMQREVWMSVFRYLSRKELCECMRVCKTWYKWCCDKRLWTKIDLSRCKAIVPQALSGIIKRQPVSLDLSWTNISKKQLTWLVNRLPGLKDLLLAGCSWSAVSALSTSSCPLLRTLDLRWAVGIKDPQIRDLLTPPTDKPGQDNRSKLRNMTDFRLAGLDITDATLRLIIRHMPLLSRLDLSHCSHLTDQSSNLLTAVGSSTRYSLTELNMAGCNKLTDQTLFFLRRIANVTLIDLRGCKQITRKACEHFISDLSINSLYCLSDEKLIQKIS.

A Phosphoserine modification is found at Ser-28. The JmjC domain maps to Phe-148–Asp-316. Thr-209 provides a ligand contact to substrate. Fe cation contacts are provided by His-212 and Asp-214. Lys-229 is a substrate binding site. His-284 is a binding site for Fe cation. Phosphoserine is present on residues Ser-390 and Ser-394. Residues Lys-419–Ser-433 show a composition bias toward low complexity. The tract at residues Lys-419–Pro-445 is disordered. Position 444 is a phosphoserine (Ser-444). Lys-505 is covalently cross-linked (Glycyl lysine isopeptide (Lys-Gly) (interchain with G-Cter in SUMO2)). The tract at residues Val-532–Ala-557 is disordered. Residue Thr-550 is modified to Phosphothreonine. Phosphoserine is present on Ser-558. The CXXC-type zinc finger occupies Ala-564–Leu-610. The Zn(2+) site is built by Cys-571, Cys-574, Cys-577, Cys-582, Cys-585, Cys-588, Cys-604, Cys-609, Cys-620, and Cys-623. The segment at Ser-617 to Glu-678 adopts a PHD-type zinc-finger fold. Residue Thr-632 is modified to Phosphothreonine. The Zn(2+) site is built by Cys-642, Cys-645, His-650, Cys-653, Cys-672, and Cys-675. Position 692 is a phosphoserine (Ser-692). Residues Leu-705–Val-789 are disordered. Thr-713 is modified (phosphothreonine). Ser-718 and Ser-731 each carry phosphoserine. 2 stretches are compositionally biased toward basic and acidic residues: residues Ser-746–Phe-757 and Thr-771–Val-789. Phosphoserine is present on residues Ser-825, Ser-868, and Ser-882. The segment at Cys-840–Asp-886 is disordered. Over residues Glu-851–Glu-870 the composition is skewed to acidic residues. Residues Asp-888–Ser-935 form the F-box domain. LRR repeat units follow at residues Trp-960 to Leu-981 and Leu-983 to Trp-1009. Arg-1019 is subject to ADP-ribosylarginine. LRR repeat units follow at residues Gly-1047–His-1072, Cys-1073–Gly-1102, Cys-1103–Gly-1127, and Cys-1128–Lys-1155.

The protein belongs to the JHDM1 histone demethylase family. Part of a SCF (SKP1-cullin-F-box) protein ligase complex. Interacts with CBX5/HP1A; the interaction promotes CBX5 localization to chromatin. The SKP1-KDM2A complex interacts with UBB. Requires Fe(2+) as cofactor. Post-translationally, mono-ADP-ribosylated at Arg-1019 in response to DNA damage, leading to displacement from chromatin, resulting in increased dimethylation of histone H3 at 'Lys-36'.

It localises to the nucleus. It is found in the nucleoplasm. The protein resides in the chromosome. The catalysed reaction is N(6),N(6)-dimethyl-L-lysyl(36)-[histone H3] + 2 2-oxoglutarate + 2 O2 = L-lysyl(36)-[histone H3] + 2 formaldehyde + 2 succinate + 2 CO2. Histone demethylase that specifically demethylates 'Lys-36' of histone H3, thereby playing a central role in histone code. Preferentially demethylates dimethylated H3 'Lys-36' residue while it has weak or no activity for mono- and tri-methylated H3 'Lys-36'. May also recognize and bind to some phosphorylated proteins and promote their ubiquitination and degradation. Required to maintain the heterochromatic state. Associates with centromeres and represses transcription of small non-coding RNAs that are encoded by the clusters of satellite repeats at the centromere. Required to sustain centromeric integrity and genomic stability, particularly during mitosis. Regulates circadian gene expression by repressing the transcriptional activator activity of CLOCK-BMAL1 heterodimer and RORA in a catalytically-independent manner. In Mus musculus (Mouse), this protein is Lysine-specific demethylase 2A (Kdm2a).